The sequence spans 391 residues: 8-amino-7-oxononanoate synthase (391 aa).

Residue Arg20 participates in substrate binding. Residue Gly106 to Tyr107 coordinates pyridoxal 5'-phosphate. Residue His131 participates in substrate binding. Pyridoxal 5'-phosphate is bound by residues Ser178, His206, and Thr234. Lys237 carries the post-translational modification N6-(pyridoxal phosphate)lysine. Thr353 provides a ligand contact to substrate.

Belongs to the class-II pyridoxal-phosphate-dependent aminotransferase family. BioF subfamily. As to quaternary structure, homodimer. The cofactor is pyridoxal 5'-phosphate.

The catalysed reaction is 6-carboxyhexanoyl-[ACP] + L-alanine + H(+) = (8S)-8-amino-7-oxononanoate + holo-[ACP] + CO2. The protein operates within cofactor biosynthesis; biotin biosynthesis. In terms of biological role, catalyzes the decarboxylative condensation of pimeloyl-[acyl-carrier protein] and L-alanine to produce 8-amino-7-oxononanoate (AON), [acyl-carrier protein], and carbon dioxide. The sequence is that of 8-amino-7-oxononanoate synthase from Trichlorobacter lovleyi (strain ATCC BAA-1151 / DSM 17278 / SZ) (Geobacter lovleyi).